A 375-amino-acid chain; its full sequence is Probable Na(+)/H(+) antiporter GerT (375 aa).

The next 10 helical transmembrane spans lie at 27–47, 89–109, 112–132, 145–165, 183–203, 204–224, 226–246, 261–281, 288–308, and 350–370; these read PSVLGKLIVGIIIGPAVLGII, AGGIIFPFIGGYVTGLLFGLI, HAIFLGLLLCATSVSITVQTL, TILGAAVFDDVIVVILLAFVM, IIFFVSIVFIAWKVVPWIMKM, LVPLRVTEALISAALIICFSF, YYSEMMGIAGIIGAFAAGIAI, PIAYAIFVPVFFVSIGMEITF, LWFIIIMTLIAIFTKLIGSGL, and ENFTAIVIVVILTTIITPPLL.

The protein belongs to the monovalent cation:proton antiporter 2 (CPA2) transporter (TC 2.A.37) family.

Its subcellular location is the membrane. In terms of biological role, contributes to the success of spore outgrowth from the germinated state during alkaline or Na(+) stress. Does not have a significant role in germination. The polypeptide is Probable Na(+)/H(+) antiporter GerT (gerT) (Bacillus cereus).